Consider the following 586-residue polypeptide: Arginine--tRNA ligase (586 aa).

The 'HIGH' region signature appears at 131 to 141 (ANPTGPMHVGH).

The protein belongs to the class-I aminoacyl-tRNA synthetase family. In terms of assembly, monomer.

It localises to the cytoplasm. The enzyme catalyses tRNA(Arg) + L-arginine + ATP = L-arginyl-tRNA(Arg) + AMP + diphosphate. The polypeptide is Arginine--tRNA ligase (Xanthobacter autotrophicus (strain ATCC BAA-1158 / Py2)).